The following is a 509-amino-acid chain: Coiled-coil domain-containing protein 181 (509 aa).

2 disordered regions span residues 1-122 (MDED…EDEE) and 237-369 (FLPP…EKKK). Composition is skewed to basic and acidic residues over residues 22–33 (DLEWLINDKEKS) and 41–56 (ACKK…KENE). Residues 60-69 (ELGQQLSDPD) show a composition bias toward polar residues. Composition is skewed to basic and acidic residues over residues 70–82 (NSPK…RRND) and 266–275 (IKKEESEAKG). The span at 319 to 333 (RIQSAGVSPVTSTYC) shows a compositional bias: polar residues. 2 coiled-coil regions span residues 335–377 (SPRQ…VFKA) and 418–488 (LKKK…RSKQ). Residues 337–369 (RQKELQKQLERKREKLKREEEQRKLEEENEKKK) are compositionally biased toward basic and acidic residues.

This sequence belongs to the CCDC181 family. Homodimer. Interacts with HOOK1. Interacts with HOOK2. Interacts with HOOK3. Predominantly expressed in testis. Expressed at lower level in brain, eye, trachea and lung. Barely expressed in tongue, heart, liver, kidney, spleen and muscle. Present at high level in elongating spermatids, whereas lower levels are observed in round spermatids (at protein level).

It localises to the cytoplasm. The protein resides in the cytoskeleton. It is found in the cell projection. The protein localises to the cilium. Its subcellular location is the flagellum. Functionally, microtubule-binding protein that localizes to the microtubular manchette of elongating spermatids. This chain is Coiled-coil domain-containing protein 181, found in Mus musculus (Mouse).